A 619-amino-acid polypeptide reads, in one-letter code: Dihydroxy-acid dehydratase 1 (619 aa).

Aspartate 81 provides a ligand contact to Mg(2+). Cysteine 122 is a binding site for [2Fe-2S] cluster. Mg(2+) is bound by residues aspartate 123 and lysine 124. The residue at position 124 (lysine 124) is an N6-carboxylysine. A [2Fe-2S] cluster-binding site is contributed by cysteine 198. Glutamate 494 serves as a coordination point for Mg(2+). Residue serine 520 is the Proton acceptor of the active site.

Belongs to the IlvD/Edd family. In terms of assembly, homodimer. [2Fe-2S] cluster is required as a cofactor. The cofactor is Mg(2+).

The enzyme catalyses (2R)-2,3-dihydroxy-3-methylbutanoate = 3-methyl-2-oxobutanoate + H2O. The catalysed reaction is (2R,3R)-2,3-dihydroxy-3-methylpentanoate = (S)-3-methyl-2-oxopentanoate + H2O. It functions in the pathway amino-acid biosynthesis; L-isoleucine biosynthesis; L-isoleucine from 2-oxobutanoate: step 3/4. It participates in amino-acid biosynthesis; L-valine biosynthesis; L-valine from pyruvate: step 3/4. Its function is as follows. Functions in the biosynthesis of branched-chain amino acids. Catalyzes the dehydration of (2R,3R)-2,3-dihydroxy-3-methylpentanoate (2,3-dihydroxy-3-methylvalerate) into 2-oxo-3-methylpentanoate (2-oxo-3-methylvalerate) and of (2R)-2,3-dihydroxy-3-methylbutanoate (2,3-dihydroxyisovalerate) into 2-oxo-3-methylbutanoate (2-oxoisovalerate), the penultimate precursor to L-isoleucine and L-valine, respectively. The sequence is that of Dihydroxy-acid dehydratase 1 from Bordetella bronchiseptica (strain ATCC BAA-588 / NCTC 13252 / RB50) (Alcaligenes bronchisepticus).